The sequence spans 276 residues: Formamidopyrimidine-DNA glycosylase (276 aa).

Catalysis depends on P2, which acts as the Schiff-base intermediate with DNA. E3 functions as the Proton donor in the catalytic mechanism. Catalysis depends on K58, which acts as the Proton donor; for beta-elimination activity. H92, R111, and R153 together coordinate DNA. The FPG-type zinc-finger motif lies at 238 to 272; the sequence is TVYGRERQNCLNCSSTIIKTKHSGRSTFYCRTCQY. R262 functions as the Proton donor; for delta-elimination activity in the catalytic mechanism.

Belongs to the FPG family. In terms of assembly, monomer. Zn(2+) serves as cofactor.

It catalyses the reaction Hydrolysis of DNA containing ring-opened 7-methylguanine residues, releasing 2,6-diamino-4-hydroxy-5-(N-methyl)formamidopyrimidine.. The enzyme catalyses 2'-deoxyribonucleotide-(2'-deoxyribose 5'-phosphate)-2'-deoxyribonucleotide-DNA = a 3'-end 2'-deoxyribonucleotide-(2,3-dehydro-2,3-deoxyribose 5'-phosphate)-DNA + a 5'-end 5'-phospho-2'-deoxyribonucleoside-DNA + H(+). Involved in base excision repair of DNA damaged by oxidation or by mutagenic agents. Acts as a DNA glycosylase that recognizes and removes damaged bases. Has a preference for oxidized purines, such as 7,8-dihydro-8-oxoguanine (8-oxoG). Has AP (apurinic/apyrimidinic) lyase activity and introduces nicks in the DNA strand. Cleaves the DNA backbone by beta-delta elimination to generate a single-strand break at the site of the removed base with both 3'- and 5'-phosphates. This is Formamidopyrimidine-DNA glycosylase from Rickettsia felis (strain ATCC VR-1525 / URRWXCal2) (Rickettsia azadi).